The primary structure comprises 160 residues: uncharacterized protein (160 aa).

The signal sequence occupies residues 1 to 23 (MSIPHSVFSALLVFVALATTTLA). At 24–132 (STEACLPTNK…DPNTAYWSSD (109 aa)) the chain is on the cytoplasmic side. A helical membrane pass occupies residues 133 to 155 (LFGFYTTPTNVTVEMTGYLIWSM). At 156 to 160 (GNRRR) the chain is on the extracellular side.

This sequence to yeast protein FLO1.

The protein resides in the cell membrane. This is an uncharacterized protein from Saccharomyces cerevisiae (strain ATCC 204508 / S288c) (Baker's yeast).